The following is a 165-amino-acid chain: MSKPILSTGLRWLWLVVVVLIVDLGSKALILQHFALGETVSLFPSLNLHYARNYGAAFSFLADKGGWQRWFFAGIAIGICVLLVVMMYRAKASQKLNNIAYALIIGGALGNLFDRLWHGFVVDMIDFYVGDWHFATFNLADTAICIGAALVVLEGFLPSKQKATA.

The next 3 helical transmembrane spans lie at 12–32, 70–90, and 102–122; these read WLWL…LILQ, WFFA…MYRA, and ALII…GFVV. Catalysis depends on residues Asp-123 and Asp-141. The helical transmembrane segment at 137 to 157 threads the bilayer; the sequence is FNLADTAICIGAALVVLEGFL.

The protein belongs to the peptidase A8 family.

The protein localises to the cell inner membrane. The catalysed reaction is Release of signal peptides from bacterial membrane prolipoproteins. Hydrolyzes -Xaa-Yaa-Zaa-|-(S,diacylglyceryl)Cys-, in which Xaa is hydrophobic (preferably Leu), and Yaa (Ala or Ser) and Zaa (Gly or Ala) have small, neutral side chains.. It participates in protein modification; lipoprotein biosynthesis (signal peptide cleavage). In terms of biological role, this protein specifically catalyzes the removal of signal peptides from prolipoproteins. In Cronobacter sakazakii (strain ATCC BAA-894) (Enterobacter sakazakii), this protein is Lipoprotein signal peptidase.